The primary structure comprises 155 residues: Ribosomal RNA large subunit methyltransferase H (155 aa).

Residues Leu-73, Gly-104, and 123 to 128 (LSALTL) contribute to the S-adenosyl-L-methionine site.

The protein belongs to the RNA methyltransferase RlmH family. Homodimer.

Its subcellular location is the cytoplasm. It catalyses the reaction pseudouridine(1915) in 23S rRNA + S-adenosyl-L-methionine = N(3)-methylpseudouridine(1915) in 23S rRNA + S-adenosyl-L-homocysteine + H(+). Specifically methylates the pseudouridine at position 1915 (m3Psi1915) in 23S rRNA. This chain is Ribosomal RNA large subunit methyltransferase H, found in Chromohalobacter salexigens (strain ATCC BAA-138 / DSM 3043 / CIP 106854 / NCIMB 13768 / 1H11).